A 377-amino-acid chain; its full sequence is Histone deacetylase 8 (377 aa).

Residues 14-324 (LVPVYIYSPE…WTYLTGVILG (311 aa)) are histone deacetylase. Position 39 is a phosphoserine (Ser-39). A substrate-binding site is contributed by Asp-101. Catalysis depends on His-143, which acts as the Proton acceptor. Gly-151 serves as a coordination point for substrate. A divalent metal cation contacts are provided by Asp-178, His-180, and Asp-267. Residue Tyr-306 participates in substrate binding.

The protein belongs to the histone deacetylase family. HD type 1 subfamily. In terms of assembly, interacts with PEPB2-MYH11, a fusion protein consisting of the 165 N-terminal residues of CBF-beta (PEPB2) with the tail region of MYH11 produced by the inversion Inv(16)(p13q22), a translocation associated with acute myeloid leukemia of M4EO subtype. The PEPB2-MYH1 fusion protein also interacts with RUNX1, a well known transcriptional regulator, suggesting that the interaction with HDAC8 may participate in the conversion of RUNX1 into a constitutive transcriptional repressor. Interacts with CBFA2T3. Interacts with phosphorylated SMG5/EST1B; this interaction protects SMG5 from ubiquitin-mediated degradation. Associates with alpha-SMA (smooth muscle alpha-actin). It depends on a divalent metal cation as a cofactor. In terms of processing, phosphorylated by PKA on serine 39. Phosphorylation reduces deacetylase activity observed preferentially on histones H3 and H4. Weakly expressed in most tissues. Expressed at higher level in heart, brain, kidney and pancreas and also in liver, lung, placenta, prostate and kidney.

The protein resides in the nucleus. It is found in the chromosome. The protein localises to the cytoplasm. The enzyme catalyses N(6)-acetyl-L-lysyl-[histone] + H2O = L-lysyl-[histone] + acetate. The catalysed reaction is N(6)-acetyl-L-lysyl-[protein] + H2O = L-lysyl-[protein] + acetate. It carries out the reaction N(6)-(2E)-butenoyl-L-lysyl-[protein] + H2O = (2E)-2-butenoate + L-lysyl-[protein]. Its activity is regulated as follows. Its activity is inhibited by trichostatin A (TSA), suberoylanilide hydroxamic acid (SAHA), 3-(1-methyl-4-phenylacetyl-1H-2-pyrrolyl)-N-hydroxy-2-propenamide (APHA), 4-dimethylamino-N-(6-hydroxycarbamoyethyl)benzamide-N-hydroxy-7-(4-dimethylaminobenzoyl)aminoheptanamide (MS-344), 5-(4-methyl-benzoylamino)-biphenyl-3,4'-dicarboxylic acid 3-dimethylamide 4'-hydroxyamide (CRA-A) and butyrate. Its function is as follows. Histone deacetylase that catalyzes the deacetylation of lysine residues on the N-terminal part of the core histones (H2A, H2B, H3 and H4). Histone deacetylation gives a tag for epigenetic repression and plays an important role in transcriptional regulation, cell cycle progression and developmental events. Histone deacetylases act via the formation of large multiprotein complexes. Also involved in the deacetylation of cohesin complex protein SMC3 regulating release of cohesin complexes from chromatin. May play a role in smooth muscle cell contractility. In addition to protein deacetylase activity, also has protein-lysine deacylase activity: acts as a protein decrotonylase by mediating decrotonylation ((2E)-butenoyl) of histones. The chain is Histone deacetylase 8 from Homo sapiens (Human).